The sequence spans 286 residues: Tryptophan 2,3-dioxygenase (286 aa).

Substrate-binding positions include 55 to 59 (FIIIH), Tyr117, and Arg121. His244 serves as a coordination point for heme. A substrate-binding site is contributed by Thr258.

It belongs to the tryptophan 2,3-dioxygenase family. In terms of assembly, homotetramer. Heme serves as cofactor.

The enzyme catalyses L-tryptophan + O2 = N-formyl-L-kynurenine. It functions in the pathway amino-acid degradation; L-tryptophan degradation via kynurenine pathway; L-kynurenine from L-tryptophan: step 1/2. In terms of biological role, heme-dependent dioxygenase that catalyzes the oxidative cleavage of the L-tryptophan (L-Trp) pyrrole ring and converts L-tryptophan to N-formyl-L-kynurenine. Catalyzes the oxidative cleavage of the indole moiety. This chain is Tryptophan 2,3-dioxygenase, found in Shewanella woodyi (strain ATCC 51908 / MS32).